We begin with the raw amino-acid sequence, 430 residues long: Asparagine--tRNA ligase (430 aa).

This sequence belongs to the class-II aminoacyl-tRNA synthetase family. Homodimer.

Its subcellular location is the cytoplasm. It catalyses the reaction tRNA(Asn) + L-asparagine + ATP = L-asparaginyl-tRNA(Asn) + AMP + diphosphate + H(+). This Listeria monocytogenes serovar 1/2a (strain ATCC BAA-679 / EGD-e) protein is Asparagine--tRNA ligase.